The chain runs to 139 residues: uncharacterized protein (139 aa).

This is an uncharacterized protein from Aquifex aeolicus (strain VF5).